We begin with the raw amino-acid sequence, 208 residues long: MLSRSMKDLLTMLKQHGINDERLLEAMSKVPRELFIDEALSHKAYENTALPIGNGQTISQPYIVAKMTSLLELQATDSVLEIGTGSGYQTAVLANLVHHVSSVERIKILQWQAKRRFKHLDLHNISTRHGDGWEGWVSKGPFNAIIVTACATEVPQRLLMQLADGGRMIIPVGEQQQMLKFIRRLGNDFHYQSIEAVRFVPLIAGELA.

The active site involves Ser-59.

It belongs to the methyltransferase superfamily. L-isoaspartyl/D-aspartyl protein methyltransferase family.

It localises to the cytoplasm. It catalyses the reaction [protein]-L-isoaspartate + S-adenosyl-L-methionine = [protein]-L-isoaspartate alpha-methyl ester + S-adenosyl-L-homocysteine. Its function is as follows. Catalyzes the methyl esterification of L-isoaspartyl residues in peptides and proteins that result from spontaneous decomposition of normal L-aspartyl and L-asparaginyl residues. It plays a role in the repair and/or degradation of damaged proteins. The chain is Protein-L-isoaspartate O-methyltransferase from Proteus mirabilis (strain HI4320).